A 410-amino-acid polypeptide reads, in one-letter code: Peptidase T (410 aa).

Histidine 79 is a binding site for Zn(2+). Residue aspartate 81 is part of the active site. Aspartate 142 serves as a coordination point for Zn(2+). Catalysis depends on glutamate 176, which acts as the Proton acceptor. Glutamate 177, aspartate 199, and histidine 381 together coordinate Zn(2+).

The protein belongs to the peptidase M20B family. The cofactor is Zn(2+).

It is found in the cytoplasm. It carries out the reaction Release of the N-terminal residue from a tripeptide.. In terms of biological role, cleaves the N-terminal amino acid of tripeptides. This is Peptidase T from Listeria monocytogenes serotype 4a (strain HCC23).